A 195-amino-acid polypeptide reads, in one-letter code: Imidazoleglycerol-phosphate dehydratase (195 aa).

Belongs to the imidazoleglycerol-phosphate dehydratase family.

Its subcellular location is the cytoplasm. It carries out the reaction D-erythro-1-(imidazol-4-yl)glycerol 3-phosphate = 3-(imidazol-4-yl)-2-oxopropyl phosphate + H2O. Its pathway is amino-acid biosynthesis; L-histidine biosynthesis; L-histidine from 5-phospho-alpha-D-ribose 1-diphosphate: step 6/9. This Cereibacter sphaeroides (strain ATCC 17023 / DSM 158 / JCM 6121 / CCUG 31486 / LMG 2827 / NBRC 12203 / NCIMB 8253 / ATH 2.4.1.) (Rhodobacter sphaeroides) protein is Imidazoleglycerol-phosphate dehydratase.